The primary structure comprises 229 residues: Ribose-5-phosphate isomerase A (229 aa).

Substrate-binding positions include 28–31 (TGST), 84–87 (DGAD), and 97–100 (KGGG). The active-site Proton acceptor is the E106. K124 lines the substrate pocket.

It belongs to the ribose 5-phosphate isomerase family. Homodimer.

It carries out the reaction aldehydo-D-ribose 5-phosphate = D-ribulose 5-phosphate. It functions in the pathway carbohydrate degradation; pentose phosphate pathway; D-ribose 5-phosphate from D-ribulose 5-phosphate (non-oxidative stage): step 1/1. Functionally, catalyzes the reversible conversion of ribose-5-phosphate to ribulose 5-phosphate. The sequence is that of Ribose-5-phosphate isomerase A from Lacticaseibacillus paracasei (strain ATCC 334 / BCRC 17002 / CCUG 31169 / CIP 107868 / KCTC 3260 / NRRL B-441) (Lactobacillus paracasei).